The chain runs to 292 residues: Shikimate dehydrogenase (NADP(+)) (292 aa).

Shikimate is bound by residues 25–27 and Thr-72; that span reads SKS. Lys-76 (proton acceptor) is an active-site residue. Positions 97 and 113 each coordinate shikimate. Residues 137 to 141, 161 to 166, and Met-230 contribute to the NADP(+) site; these read GAGGA and NRTQSK. Residue Tyr-232 coordinates shikimate. Gly-254 is an NADP(+) binding site.

It belongs to the shikimate dehydrogenase family. As to quaternary structure, homodimer.

The enzyme catalyses shikimate + NADP(+) = 3-dehydroshikimate + NADPH + H(+). It participates in metabolic intermediate biosynthesis; chorismate biosynthesis; chorismate from D-erythrose 4-phosphate and phosphoenolpyruvate: step 4/7. Involved in the biosynthesis of the chorismate, which leads to the biosynthesis of aromatic amino acids. Catalyzes the reversible NADPH linked reduction of 3-dehydroshikimate (DHSA) to yield shikimate (SA). The chain is Shikimate dehydrogenase (NADP(+)) from Shewanella sp. (strain ANA-3).